Here is a 476-residue protein sequence, read N- to C-terminus: UDP-N-acetylmuramate--L-alanine ligase (476 aa).

ATP is bound at residue 112–118; it reads GTHGKTT.

Belongs to the MurCDEF family.

It localises to the cytoplasm. The catalysed reaction is UDP-N-acetyl-alpha-D-muramate + L-alanine + ATP = UDP-N-acetyl-alpha-D-muramoyl-L-alanine + ADP + phosphate + H(+). It functions in the pathway cell wall biogenesis; peptidoglycan biosynthesis. Functionally, cell wall formation. The protein is UDP-N-acetylmuramate--L-alanine ligase of Magnetococcus marinus (strain ATCC BAA-1437 / JCM 17883 / MC-1).